The sequence spans 156 residues: Pilin-like protein PilA1 (156 aa).

Residues 1–5 (MTRRG) constitute a propeptide, leader sequence. Leucine 6 is subject to N-methylleucine. Residues 6–29 (LTLLELLLVLGILGVLLGLALPLL) form a helical membrane-spanning segment.

Its subcellular location is the cell inner membrane. The protein resides in the cell outer membrane. It is found in the periplasm. Functionally, plays an essential role in natural DNA transformation but is not required for pilus biogenesis. The chain is Pilin-like protein PilA1 (pilA1) from Thermus thermophilus (strain ATCC BAA-163 / DSM 7039 / HB27).